Reading from the N-terminus, the 41-residue chain is Histone H2B.3, sperm (41 aa).

Residues 1 to 41 (MPRSPSKSSPKKGSPRKASPKRGGKGAKRAGKGGRRRTVVK) are disordered. 4 consecutive short sequence motifs (SPKK motif) follow at residues 4–7 (SPSK), 9–12 (SPKK), 14–17 (SPRK), and 19–22 (SPKR). Over residues 9 to 41 (SPKKGSPRKASPKRGGKGAKRAGKGGRRRTVVK) the composition is skewed to basic residues. Phosphoserine is present on residues S14 and S19.

Belongs to the histone H2B family. As to quaternary structure, the nucleosome is a histone octamer containing two molecules each of H2A, H2B, H3 and H4 assembled in one H3-H4 heterotetramer and two H2A-H2B heterodimers. The octamer wraps approximately 147 bp of DNA. Monoubiquitination gives a specific tag for epigenetic transcriptional activation and is also prerequisite for histone H3 'Lys-4' and 'Lys-79' methylation. In terms of processing, phosphorylated on SPKK motifs 3 and 4; which may regulate DNA binding. Dephosphorylated during maturation of spermatids to mature sperm and rephosphorylated at fertilization.

It is found in the nucleus. The protein resides in the chromosome. Core component of nucleosome. Nucleosomes wrap and compact DNA into chromatin, limiting DNA accessibility to the cellular machineries which require DNA as a template. Histones thereby play a central role in transcription regulation, DNA repair, DNA replication and chromosomal stability. DNA accessibility is regulated via a complex set of post-translational modifications of histones, also called histone code, and nucleosome remodeling. This is Histone H2B.3, sperm from Echinus esculentus (Sea urchin).